Here is a 177-residue protein sequence, read N- to C-terminus: Large ribosomal subunit protein uL6 (177 aa).

This sequence belongs to the universal ribosomal protein uL6 family. As to quaternary structure, part of the 50S ribosomal subunit.

Its function is as follows. This protein binds to the 23S rRNA, and is important in its secondary structure. It is located near the subunit interface in the base of the L7/L12 stalk, and near the tRNA binding site of the peptidyltransferase center. The polypeptide is Large ribosomal subunit protein uL6 (Haemophilus influenzae (strain 86-028NP)).